The following is a 172-amino-acid chain: Shikimate kinase (172 aa).

Residue 14 to 19 (GAGKST) participates in ATP binding. A Mg(2+)-binding site is contributed by Ser-18. Residues Asp-36, Arg-60, and Gly-82 each coordinate substrate. Arg-120 is a binding site for ATP. Residue Arg-139 participates in substrate binding. Gln-156 lines the ATP pocket.

The protein belongs to the shikimate kinase family. As to quaternary structure, monomer. Mg(2+) is required as a cofactor.

The protein localises to the cytoplasm. The catalysed reaction is shikimate + ATP = 3-phosphoshikimate + ADP + H(+). It participates in metabolic intermediate biosynthesis; chorismate biosynthesis; chorismate from D-erythrose 4-phosphate and phosphoenolpyruvate: step 5/7. Its function is as follows. Catalyzes the specific phosphorylation of the 3-hydroxyl group of shikimic acid using ATP as a cosubstrate. This chain is Shikimate kinase, found in Aliivibrio fischeri (strain ATCC 700601 / ES114) (Vibrio fischeri).